Here is a 198-residue protein sequence, read N- to C-terminus: Remorin (198 aa).

Over residues 1 to 11 (MAELEAKKVEI) the composition is skewed to basic and acidic residues. Residues 1–24 (MAELEAKKVEIVDPAPPAPGPVEA) are disordered. The stretch at 97–184 (EESEKSKAEN…LKAEELAAKY (88 aa)) forms a coiled coil.

Belongs to the remorin family. Post-translationally, the N-terminus is blocked. In terms of processing, phosphorylated.

The protein localises to the cell membrane. Functionally, binds to both simple and complex galacturonides. May be involved in cell-to-cell signaling and molecular transport. The polypeptide is Remorin (Solanum tuberosum (Potato)).